Here is a 419-residue protein sequence, read N- to C-terminus: UDP-N-acetylglucosamine 1-carboxyvinyltransferase (419 aa).

22–23 (KN) contacts phosphoenolpyruvate. Residue Arg91 coordinates UDP-N-acetyl-alpha-D-glucosamine. Cys115 (proton donor) is an active-site residue. Cys115 is subject to 2-(S-cysteinyl)pyruvic acid O-phosphothioketal. Residues 120–124 (RPVDL), 160–163 (KVSV), Asp305, and Ile327 contribute to the UDP-N-acetyl-alpha-D-glucosamine site.

This sequence belongs to the EPSP synthase family. MurA subfamily.

It localises to the cytoplasm. The catalysed reaction is phosphoenolpyruvate + UDP-N-acetyl-alpha-D-glucosamine = UDP-N-acetyl-3-O-(1-carboxyvinyl)-alpha-D-glucosamine + phosphate. Its pathway is cell wall biogenesis; peptidoglycan biosynthesis. Its function is as follows. Cell wall formation. Adds enolpyruvyl to UDP-N-acetylglucosamine. The chain is UDP-N-acetylglucosamine 1-carboxyvinyltransferase from Citrobacter koseri (strain ATCC BAA-895 / CDC 4225-83 / SGSC4696).